A 1525-amino-acid polypeptide reads, in one-letter code: Receptor-type guanylate cyclase Gyc76C (1525 aa).

An N-terminal signal peptide occupies residues 1 to 19; the sequence is MTRWPFNLLLLLSVAVRDC. Over 20 to 493 the chain is Extracellular; the sequence is SNHRTVLTVG…KKDDTHYTST (474 aa). N-linked (GlcNAc...) asparagine glycosylation is found at Asn74, Asn184, Asn222, Asn338, Asn383, Asn394, Asn416, Asn428, and Asn458. A helical transmembrane segment spans residues 494-514; the sequence is VAAVVLGVLLFCSGVITMSIY. The Cytoplasmic segment spans residues 515–1525; sequence RKWKIELEIE…AAARDRESIV (1011 aa). Residues 547-824 form the Protein kinase domain; it reads PSKVSLMSAQ…SVIRNRLKKM (278 aa). Residues 553–561 and Lys581 contribute to the ATP site; that span reads MSAQSYGSR. Residues 896-1026 form the Guanylate cyclase domain; the sequence is TIYFSDIVGF…DTVNTASRME (131 aa). Residues Asp901, Ile902, and Asp945 each contribute to the Mg(2+) site. Disordered regions lie at residues 1122–1168, 1192–1217, and 1256–1308; these read GSRR…NGLG, ETNE…LVRQ, and ESRS…VHSS. Over residues 1147 to 1162 the composition is skewed to basic and acidic residues; it reads ESPRMVSKRDRDRERP. Residues 1202 to 1212 show a composition bias toward gly residues; that stretch reads GGSGGVSGSGS. Over residues 1282–1308 the composition is skewed to polar residues; that stretch reads LSKNNSRSLDTGVSLISGNPNGEVHSS.

Belongs to the adenylyl cyclase class-4/guanylyl cyclase family. Interacts with the semaphorin 1A receptor PlexA; PlexA enhances Gyc76C catalytic activity. Interacts with the PDZ domain-containing protein kermit; kermit increases cell surface expression of Gyc76C. In the adult, widely distributed in the head and thorax with highest levels in the optic lobe and central brain and expression also detected in the retina. Expressed at similar levels in adult head and body. In females, highly expressed in oocytes with lower levels in the digestive tract. In mid-embryogenesis, enriched in the circular visceral mesoderm that overlies the migrating salivary gland and in the fat body that underlies the gland but at background levels in the gland itself. In late embryogenesis, detected in the mature salivary gland, in the somatic body wall muscles and the tendon cells to which the muscles attach, and in the constricting midgut. Also expressed in migrating tracheal cells at mid-embryogenesis and in the developed trachea at the end of embryogenesis with enrichment in the apical domains.

The protein localises to the cell membrane. It carries out the reaction GTP = 3',5'-cyclic GMP + diphosphate. Guanylate cyclase involved in the production of the second messenger cGMP. Acts as a receptor for the NPLP1-4 peptide and modulates the innate immune IMD pathway in response to salt stress by inducing nuclear translocation of NF-kappa-B protein Rel which leads to increased expression of the antimicrobial peptide diptericin. Plays a role in Sema-1a-mediated axon repulsion which is required for the correct establishment of neuromuscular connectivity. Required in developing embryonic somatic muscle for correct patterning of ventral and lateral muscles and for localization of integrin beta-ps at developing dorsal muscle myotendinous junctions. Required for invagination, migration and lumen shape of the embryonic salivary gland by regulating the localization of the integrin-binding protein rhea/Talin to the visceral mesoderm surrounding the gland and maintaining the laminin matrix. Required in the developing wing to regulate extracellular matrix (ECM) organization by activating the cGMP-dependent protein kinase For which represses the activity of matrix metalloproteases such as Mmp2 and decreases ECM matrix reorganization. The polypeptide is Receptor-type guanylate cyclase Gyc76C (Drosophila melanogaster (Fruit fly)).